Consider the following 499-residue polypeptide: Glycerol kinase (499 aa).

ADP is bound at residue Thr-12. The ATP site is built by Thr-12, Thr-13, and Ser-14. Sn-glycerol 3-phosphate is bound at residue Thr-12. Arg-16 lines the ADP pocket. Sn-glycerol 3-phosphate is bound by residues Arg-82, Glu-83, Tyr-134, and Asp-245. Residues Arg-82, Glu-83, Tyr-134, Asp-245, and Gln-246 each coordinate glycerol. Residues Thr-267 and Gly-311 each contribute to the ADP site. ATP is bound by residues Thr-267, Gly-311, Gln-315, and Gly-412. 2 residues coordinate ADP: Gly-412 and Asn-416.

This sequence belongs to the FGGY kinase family.

The catalysed reaction is glycerol + ATP = sn-glycerol 3-phosphate + ADP + H(+). The protein operates within polyol metabolism; glycerol degradation via glycerol kinase pathway; sn-glycerol 3-phosphate from glycerol: step 1/1. Its activity is regulated as follows. Inhibited by fructose 1,6-bisphosphate (FBP). In terms of biological role, key enzyme in the regulation of glycerol uptake and metabolism. Catalyzes the phosphorylation of glycerol to yield sn-glycerol 3-phosphate. This Acidiphilium cryptum (strain JF-5) protein is Glycerol kinase.